The sequence spans 118 residues: Ribosomal silencing factor RsfS (118 aa).

It belongs to the Iojap/RsfS family. Interacts with ribosomal protein uL14 (rplN).

Its subcellular location is the cytoplasm. Functionally, functions as a ribosomal silencing factor. Interacts with ribosomal protein uL14 (rplN), blocking formation of intersubunit bridge B8. Prevents association of the 30S and 50S ribosomal subunits and the formation of functional ribosomes, thus repressing translation. The protein is Ribosomal silencing factor RsfS of Bacillus subtilis (strain 168).